The following is a 209-amino-acid chain: Orotate phosphoribosyltransferase (209 aa).

5-phospho-alpha-D-ribose 1-diphosphate is bound by residues Arg96, Lys100, His102, and 122 to 130; that span reads EDLISTGGS. Ser126 is a binding site for orotate.

This sequence belongs to the purine/pyrimidine phosphoribosyltransferase family. PyrE subfamily. Homodimer. Mg(2+) is required as a cofactor.

It catalyses the reaction orotidine 5'-phosphate + diphosphate = orotate + 5-phospho-alpha-D-ribose 1-diphosphate. Its pathway is pyrimidine metabolism; UMP biosynthesis via de novo pathway; UMP from orotate: step 1/2. Functionally, catalyzes the transfer of a ribosyl phosphate group from 5-phosphoribose 1-diphosphate to orotate, leading to the formation of orotidine monophosphate (OMP). The polypeptide is Orotate phosphoribosyltransferase (Listeria monocytogenes serovar 1/2a (strain ATCC BAA-679 / EGD-e)).